The chain runs to 810 residues: Transmembrane GTPase Marf (810 aa).

The Cytoplasmic segment spans residues 1–637; sequence MAAYLNRTIS…TTTPVEATPV (637 aa). Threonine 8 carries the post-translational modification Phosphothreonine. The interval 13–40 is disordered; it reads TGQTGPADDDRHASSTDTVDKSGPGSPL. Residues 20–32 show a composition bias toward basic and acidic residues; it reads DDDRHASSTDTVD. Residue serine 38 is modified to Phosphoserine. The 249-residue stretch at 134-382 folds into the Dynamin-type G domain; the sequence is QRDHMKVAFF…IRYFEFQDFE (249 aa). A G1 motif region spans residues 144 to 151; the sequence is GRTSNGKS. A GTP-binding site is contributed by 147–152; the sequence is SNGKSS. The G2 motif stretch occupies residues 170–171; it reads TT. Residues 239–242 form a G3 motif region; the sequence is DSPG. 298–301 contributes to the GTP binding site; that stretch reads NRWD. The segment at 298–301 is G4 motif; the sequence is NRWD. Position 327 (lysine 327) is a region of interest, G5 motif. Serine 345 is a GTP binding site. Positions 427–476 form a coiled coil; that stretch reads RNLKQDQKNLLTERIQGTETQMMQVTREMKMKIHNMVEEVEEKVSKALNE. Threonine 553 is subject to Phosphothreonine. At serine 554 the chain carries Phosphoserine. Threonine 555 carries the post-translational modification Phosphothreonine. Residues 609–630 are disordered; the sequence is GQPALVNRQSSIGHSVSTPTTT. A helical transmembrane segment spans residues 638–648; that stretch reads CLLPAPVVAGI. Topologically, residues 649–668 are mitochondrial intermembrane; the sequence is TPEQLSLISRFAVSSIGSQG. The helical transmembrane segment at 669–689 threads the bilayer; sequence TVGGLVVAGVMLKTIGWRVLV. The Cytoplasmic portion of the chain corresponds to 690–810; it reads GVGALYGCIY…IFEHNYISPQ (121 aa). Residues 759 to 806 are a coiled coil; it reads TATTDMNDELKTLDSQLNILEANQKQLKLLRNKANYIQNELDIFEHNY.

This sequence belongs to the TRAFAC class dynamin-like GTPase superfamily. Dynamin/Fzo/YdjA family. Mitofusin subfamily. Interacts with Mul1. Post-translationally, ubiquitinated by park and Mul1. Ubiquitinated, probably by HUWE1, when dietary stearate (C18:0) levels are low; ubiquitination inhibits mitochondrial fusion. Widely expressed in embryos, accumulating in the mesoderm and endoderm during gut development. In the male germ line, it is expressed in spermatogonia, spermatocytes and early spermatids.

It is found in the mitochondrion outer membrane. It carries out the reaction GTP + H2O = GDP + phosphate + H(+). In terms of biological role, mitochondrial outer membrane GTPase that mediates mitochondrial clustering and fusion. Mitochondrial fusion is the physical merging of mitochondria that gives rise to mitochondrial networks, and this process is counterbalanced by mitochondrial fission which fragments networks. Promotes, but is not required for park recruitment to dysfunctional mitochondria. This Drosophila melanogaster (Fruit fly) protein is Transmembrane GTPase Marf (Marf).